Consider the following 713-residue polypeptide: Polyribonucleotide nucleotidyltransferase (713 aa).

The Mg(2+) site is built by aspartate 488 and aspartate 494. Residues 555 to 614 (PQMEIIKVPTDKIRDVIGSGGKVIRGIVDETGAKVNIDDDGTVQISAMDRKSIDAAIKMI) form the KH domain. Residues 624–692 (GEIYEGKVVS…ERGKVRLSMK (69 aa)) form the S1 motif domain.

The protein belongs to the polyribonucleotide nucleotidyltransferase family. Mg(2+) is required as a cofactor.

Its subcellular location is the cytoplasm. It carries out the reaction RNA(n+1) + phosphate = RNA(n) + a ribonucleoside 5'-diphosphate. Involved in mRNA degradation. Catalyzes the phosphorolysis of single-stranded polyribonucleotides processively in the 3'- to 5'-direction. In Hyphomonas neptunium (strain ATCC 15444), this protein is Polyribonucleotide nucleotidyltransferase.